Consider the following 425-residue polypeptide: Zinc finger protein 789 (425 aa).

Residues 11–82 (LSFEDVAMYF…DLPRTGNRKA (72 aa)) enclose the KRAB domain. 8 consecutive C2H2-type zinc fingers follow at residues 201-223 (YECS…QRIH), 229-251 (FECK…KQCH), 257-279 (YRCH…KRIH), 285-307 (YKCS…QVIH), 313-335 (HKCL…QQIH), 341-363 (HKCS…QRIH), 369-391 (FQCG…QVIH), and 397-419 (YQCV…QGTH).

This sequence belongs to the krueppel C2H2-type zinc-finger protein family.

It is found in the nucleus. Functionally, may be involved in transcriptional regulation. The sequence is that of Zinc finger protein 789 (ZNF789) from Homo sapiens (Human).